A 153-amino-acid chain; its full sequence is MKCPFCNSTDTQVKDSRSIENDMLIRRRRVCLVCHSRFTTTEKLLLRSFMVVKKNGETELFNKQKLLSSILIATKKRPVSHEGINMMVNNIFYELEGKKENAIPTNVIGKMVMDNLFKLDKVAYVRFASVYMNFRNINDFSNIIAKIISEKTP.

The segment at 3–34 is a zinc-finger region; it reads CPFCNSTDTQVKDSRSIENDMLIRRRRVCLVC. The ATP-cone domain occupies 49 to 139; sequence FMVVKKNGET…VYMNFRNIND (91 aa).

The protein belongs to the NrdR family. Zn(2+) is required as a cofactor.

Its function is as follows. Negatively regulates transcription of bacterial ribonucleotide reductase nrd genes and operons by binding to NrdR-boxes. The chain is Transcriptional repressor NrdR from Ehrlichia chaffeensis (strain ATCC CRL-10679 / Arkansas).